A 74-amino-acid polypeptide reads, in one-letter code: Large ribosomal subunit protein uL30 (74 aa).

This sequence belongs to the universal ribosomal protein uL30 family. As to quaternary structure, part of the 50S ribosomal subunit.

The chain is Large ribosomal subunit protein uL30 from Koribacter versatilis (strain Ellin345).